A 334-amino-acid polypeptide reads, in one-letter code: Probable fructose-bisphosphate aldolase class 1 (334 aa).

This sequence belongs to the class I fructose-bisphosphate aldolase family.

The catalysed reaction is beta-D-fructose 1,6-bisphosphate = D-glyceraldehyde 3-phosphate + dihydroxyacetone phosphate. It participates in carbohydrate degradation; glycolysis; D-glyceraldehyde 3-phosphate and glycerone phosphate from D-glucose: step 4/4. This Xanthomonas campestris pv. campestris (strain ATCC 33913 / DSM 3586 / NCPPB 528 / LMG 568 / P 25) protein is Probable fructose-bisphosphate aldolase class 1.